Here is a 521-residue protein sequence, read N- to C-terminus: NAD(P)H-quinone oxidoreductase subunit 2 (521 aa).

The next 14 helical transmembrane spans lie at 16–36 (ILPE…DLIG), 40–60 (VALA…GLLV), 80–100 (LSII…LMSV), 110–130 (LAEF…LSAA), 133–153 (LVMV…MTGY), 168–188 (LLIG…LYGL), 212–232 (LGLA…ISAV), 246–266 (PTPV…AVAI), 280–300 (WHVI…VVAL), 308–328 (MLAY…VAGS), 336–356 (VFYM…IILF), 380–400 (LGLS…GFFG), 402–422 (IYIF…LGLV), and 468–488 (VGIV…NPLF).

It belongs to the complex I subunit 2 family. In terms of assembly, NDH-1 can be composed of about 15 different subunits; different subcomplexes with different compositions have been identified which probably have different functions.

Its subcellular location is the cellular thylakoid membrane. The catalysed reaction is a plastoquinone + NADH + (n+1) H(+)(in) = a plastoquinol + NAD(+) + n H(+)(out). The enzyme catalyses a plastoquinone + NADPH + (n+1) H(+)(in) = a plastoquinol + NADP(+) + n H(+)(out). Functionally, NDH-1 shuttles electrons from an unknown electron donor, via FMN and iron-sulfur (Fe-S) centers, to quinones in the respiratory and/or the photosynthetic chain. The immediate electron acceptor for the enzyme in this species is believed to be plastoquinone. Couples the redox reaction to proton translocation, and thus conserves the redox energy in a proton gradient. Cyanobacterial NDH-1 also plays a role in inorganic carbon-concentration. This chain is NAD(P)H-quinone oxidoreductase subunit 2, found in Synechocystis sp. (strain ATCC 27184 / PCC 6803 / Kazusa).